A 204-amino-acid polypeptide reads, in one-letter code: Late expression factor 2 (204 aa).

This sequence belongs to the baculoviridae LEF-2 family.

Required for late and very late gene expression. Specifically required for expression from the vp39 and polh promoters. The chain is Late expression factor 2 (LEF-2) from Orgyia pseudotsugata (Douglas-fir tussock moth).